The sequence spans 449 residues: Protein translocase subunit SecD (449 aa).

A run of 6 helical transmembrane segments spans residues 6 to 26 (GLVF…VLPT), 272 to 292 (LAVK…IAFY), 294 to 314 (LPGL…LALF), 317 to 337 (VPVT…GMAV), 379 to 399 (TFIA…GAPV), and 401 to 421 (GFAV…IFVT).

The protein belongs to the SecD/SecF family. SecD subfamily. Forms a complex with SecF. Part of the essential Sec protein translocation apparatus which comprises SecA, SecYEG and auxiliary proteins SecDF. Other proteins may also be involved.

The protein resides in the cell membrane. Its function is as follows. Part of the Sec protein translocase complex. Interacts with the SecYEG preprotein conducting channel. SecDF uses the proton motive force (PMF) to complete protein translocation after the ATP-dependent function of SecA. The polypeptide is Protein translocase subunit SecD (Dehalococcoides mccartyi (strain VS)).